The following is a 206-amino-acid chain: Probable GTP-binding protein EngB (206 aa).

The EngB-type G domain maps to Asp-23–Glu-195. GTP is bound by residues Gly-31–Ser-38, Gly-58–Leu-62, Asp-76–Gly-79, Thr-143–Asp-146, and Phe-174–Ala-176. Mg(2+) is bound by residues Ser-38 and Thr-60.

This sequence belongs to the TRAFAC class TrmE-Era-EngA-EngB-Septin-like GTPase superfamily. EngB GTPase family. Mg(2+) serves as cofactor.

In terms of biological role, necessary for normal cell division and for the maintenance of normal septation. This chain is Probable GTP-binding protein EngB, found in Geobacter sulfurreducens (strain ATCC 51573 / DSM 12127 / PCA).